A 191-amino-acid chain; its full sequence is Fe/S biogenesis protein NfuA (191 aa).

Cys149 and Cys152 together coordinate [4Fe-4S] cluster.

It belongs to the NfuA family. In terms of assembly, homodimer. [4Fe-4S] cluster serves as cofactor.

In terms of biological role, involved in iron-sulfur cluster biogenesis. Binds a 4Fe-4S cluster, can transfer this cluster to apoproteins, and thereby intervenes in the maturation of Fe/S proteins. Could also act as a scaffold/chaperone for damaged Fe/S proteins. This chain is Fe/S biogenesis protein NfuA, found in Enterobacter sp. (strain 638).